Reading from the N-terminus, the 147-residue chain is Large ribosomal subunit protein bL9 (147 aa).

The protein belongs to the bacterial ribosomal protein bL9 family.

In terms of biological role, binds to the 23S rRNA. This is Large ribosomal subunit protein bL9 from Natranaerobius thermophilus (strain ATCC BAA-1301 / DSM 18059 / JW/NM-WN-LF).